The sequence spans 233 residues: 2-C-methyl-D-erythritol 4-phosphate cytidylyltransferase (233 aa).

It belongs to the IspD/TarI cytidylyltransferase family. IspD subfamily.

It carries out the reaction 2-C-methyl-D-erythritol 4-phosphate + CTP + H(+) = 4-CDP-2-C-methyl-D-erythritol + diphosphate. Its pathway is isoprenoid biosynthesis; isopentenyl diphosphate biosynthesis via DXP pathway; isopentenyl diphosphate from 1-deoxy-D-xylulose 5-phosphate: step 2/6. Its function is as follows. Catalyzes the formation of 4-diphosphocytidyl-2-C-methyl-D-erythritol from CTP and 2-C-methyl-D-erythritol 4-phosphate (MEP). This is 2-C-methyl-D-erythritol 4-phosphate cytidylyltransferase from Syntrophotalea carbinolica (strain DSM 2380 / NBRC 103641 / GraBd1) (Pelobacter carbinolicus).